We begin with the raw amino-acid sequence, 991 residues long: Translation initiation factor IF-2 (991 aa).

Disordered regions lie at residues 58-82 (EGKK…GRSR) and 106-405 (QARA…PAPQ). A compositionally biased stretch (low complexity) spans 106–164 (QARADAAASDAAPAEPAPAAAEPSASAPVTAPVNAPAADAPQAPATAAPDTAAPAAETP). Over residues 165–175 (SQPPAVEPQPA) the composition is skewed to pro residues. Low complexity-rich tracts occupy residues 190–206 (AKPA…AAVE), 221–258 (AVQA…ASKP), and 267–276 (APVPVAAPAV). A compositionally biased stretch (basic and acidic residues) spans 279 to 289 (AGREEARRAAE). Over residues 379 to 388 (RAGGKGGKGG) the composition is skewed to gly residues. Positions 395–405 (QAERRHEPAPQ) are enriched in basic and acidic residues. Positions 492 to 659 (PRAPVVTVMG…NVLLQAEILE (168 aa)) constitute a tr-type G domain. Residues 501 to 508 (GHVDHGKT) are G1. 501–508 (GHVDHGKT) lines the GTP pocket. The segment at 526 to 530 (GITQH) is G2. Residues 547-550 (DTPG) form a G3 region. GTP-binding positions include 547–551 (DTPGH) and 601–604 (NKID). Positions 601–604 (NKID) are G4. Residues 637-639 (SAK) form a G5 region.

It belongs to the TRAFAC class translation factor GTPase superfamily. Classic translation factor GTPase family. IF-2 subfamily.

It is found in the cytoplasm. In terms of biological role, one of the essential components for the initiation of protein synthesis. Protects formylmethionyl-tRNA from spontaneous hydrolysis and promotes its binding to the 30S ribosomal subunits. Also involved in the hydrolysis of GTP during the formation of the 70S ribosomal complex. This chain is Translation initiation factor IF-2, found in Bordetella petrii (strain ATCC BAA-461 / DSM 12804 / CCUG 43448).